A 465-amino-acid chain; its full sequence is Ras GTPase-activating protein-binding protein 1 (465 aa).

Residues 11–133 (VGREFVRQYY…FYVHNDIFRY (123 aa)) form the NTF2 domain. Residues Lys-36, Lys-50, Lys-59, Lys-64, Lys-76, and Lys-123 each participate in a glycyl lysine isopeptide (Lys-Gly) (interchain with G-Cter in ubiquitin) cross-link. Residues 142-224 (VTEPQEESEE…EAALEEAAPD (83 aa)) are acidic disordered region. Thr-143 is modified (phosphothreonine). Residues 144–330 (EPQEESEEEV…GEPGDVEPRR (187 aa)) form a disordered region. 2 stretches are compositionally biased toward acidic residues: residues 145–157 (PQEESEEEVEEPE) and 184–205 (EHLEEPVVEPEPEPEPEPEPEP). At Ser-149 the chain carries Phosphoserine. A phosphoserine mark is found at Ser-231, Ser-248, and Ser-251. Residues 248–257 (SWASVTSKNL) are compositionally biased toward polar residues. Composition is skewed to basic and acidic residues over residues 295-305 (PQRDQRVREQR) and 316-330 (PIREAGEPGDVEPRR). In terms of domain architecture, RRM spans 338–413 (HQLFIGNLPH…VRLNVEEKKT (76 aa)). Residues Lys-351 and Lys-355 each participate in a glycyl lysine isopeptide (Lys-Gly) (interchain with G-Cter in ubiquitin) cross-link. Residue Ser-371 is modified to Phosphoserine. Lys-374 is covalently cross-linked (Glycyl lysine isopeptide (Lys-Gly) (interchain with G-Cter in ubiquitin)). Residue Lys-374 is modified to N6-acetyllysine; alternate. Lys-374 participates in a covalent cross-link: Glycyl lysine isopeptide (Lys-Gly) (interchain with G-Cter in SUMO2); alternate. Lys-391 is covalently cross-linked (Glycyl lysine isopeptide (Lys-Gly) (interchain with G-Cter in ubiquitin); alternate). Residues 408-464 (VEEKKTRAAREGDRRDNRLRGPGGPRGGPSGGMRGPPRGGMVQKPGFGVGRGITTPR) form an RG-rich region region. Residues 411–426 (KKTRAAREGDRRDNRL) show a composition bias toward basic and acidic residues. The segment at 411-465 (KKTRAAREGDRRDNRLRGPGGPRGGPSGGMRGPPRGGMVQKPGFGVGRGITTPRQ) is disordered. Arg-427 bears the Asymmetric dimethylarginine mark. Gly residues predominate over residues 428–445 (GPGGPRGGPSGGMRGPPR). Asymmetric dimethylarginine; alternate is present on Arg-433. Omega-N-methylarginine; alternate occurs at positions 433, 445, 458, and 464. Arg-458 carries the post-translational modification Dimethylated arginine; alternate.

As to quaternary structure, homodimer and oligomer. Component of a TAU mRNP complex, at least composed of IGF2BP1, ELAVL4 and G3BP1. Binds to the SH3 domain of Ras GTPase-activating protein (RASA1) in proliferating cells. No interaction in quiescent cells. Interacts (via NTF2 domain) with USP10; inhibiting stress granule formation by lowering G3BP1 valence. Interacts (via NTF2 domain) with CAPRIN1; promoting stress granule formation by lowering the saturation-concentration of G3BP1. Interacts (via NTF2 domain) with UBAP2L; promoting stress granule formation. Associates (via RG-rich region) with 40S ribosome subunits. Interacts with RPTOR and SPAG5; this complex is increased by oxidative stress. Interacts with ATXN2L. Interacts with STYXL1. Interacts with CGAS (via N-terminus); this interaction promotes the DNA-binding and activation of CGAS. Interacts (via C-terminus) with RIGI. Interacts with PABPC1. Interacts with QKI (isoforms QKI6 and QKI7); directing N(7)-methylguanine-containing mRNAs to stress granules. Mg(2+) is required as a cofactor. Phosphorylation of the acidic disordered region regulates stress granule assembly. RASA1-dependent phosphorylation of Ser-149 induces a conformational change that prevents self-association. Dephosphorylation after HRAS activation is required for stress granule assembly. Ser-149 phosphorylation induces partial nuclear localization. Post-translationally, arg-435 is dimethylated, probably to asymmetric dimethylarginine. In terms of processing, ubiquitinated by TRIM21 via 'Lys-63'-linked polyubiquitination in the NTF2 domain in response to heat shock, leading to stress granule disassembly: ubiquitination promotes interaction with the FAF2 adapter, followed by interaction with VCP, which extracts G3BP1 from stress granules, leading to stress granule disassembly. In case of prolonged stress, ubiquitination by TRIM21 leads to autophagy-dependent degradation of G3BP1 via recruitment of ubiquitinated G3BP1 by SQSTM1 and/or CALCOCO2 to autophagosomes. In terms of tissue distribution, ubiquitous.

It localises to the cytoplasm. The protein resides in the cytosol. It is found in the perikaryon. The protein localises to the stress granule. Its subcellular location is the nucleus. It carries out the reaction ATP + H2O = ADP + phosphate + H(+). With respect to regulation, under physiological conditions, G3BP1 adopts a compact state that is stabilized by intramolecular interactions between the RG-rich and the acidic regions that inhibit phase separation. Upon stress, polysomes disassemble and mRNAs are released in an unfolded protein-free state. Binding of unfolded mRNA to G3BP1 outcompetes the intramolecular interactions and RNA-bound G3BP1 adopts an expanded conformation in which the RG-rich region becomes exposed to engage in protein-protein and protein-RNA interactions, allowing physical cross-linking of RNA molecules to form protein-RNA condensates, leading to liquid-liquid phase separation (LLPS). In terms of biological role, protein involved in various processes, such as stress granule formation and innate immunity. Plays an essential role in stress granule formation. Stress granules are membraneless compartments that store mRNAs and proteins, such as stalled translation pre-initiation complexes, in response to stress. Promotes formation of stress granules phase-separated membraneless compartment by undergoing liquid-liquid phase separation (LLPS) upon unfolded RNA-binding: functions as a molecular switch that triggers RNA-dependent LLPS in response to a rise in intracellular free RNA concentrations. Also acts as an ATP- and magnesium-dependent helicase: unwinds DNA/DNA, RNA/DNA, and RNA/RNA substrates with comparable efficiency. Acts unidirectionally by moving in the 5' to 3' direction along the bound single-stranded DNA. Unwinds preferentially partial DNA and RNA duplexes having a 17 bp annealed portion and either a hanging 3' tail or hanging tails at both 5'- and 3'-ends. Plays an essential role in innate immunity by promoting CGAS and RIGI activity. Participates in the DNA-triggered cGAS/STING pathway by promoting the DNA binding and activation of CGAS. Triggers the condensation of cGAS, a process probably linked to the formation of membrane-less organelles. Also enhances RIGI-induced type I interferon production probably by helping RIGI at sensing pathogenic RNA. May also act as a phosphorylation-dependent sequence-specific endoribonuclease in vitro: Cleaves exclusively between cytosine and adenine and cleaves MYC mRNA preferentially at the 3'-UTR. The sequence is that of Ras GTPase-activating protein-binding protein 1 (G3bp1) from Mus musculus (Mouse).